Here is a 616-residue protein sequence, read N- to C-terminus: Glycogenin-1 (616 aa).

3 residues coordinate UDP: L10, Y16, and R95. 11 residues coordinate UDP-alpha-D-glucose: L10, Y16, R95, K104, D120, D122, N158, S159, D185, D188, and Q189. 2 residues coordinate UDP: D120 and D122. Mn(2+) is bound by residues D120 and D122. Y230 carries an O-linked (Glc...) tyrosine glycan. UDP is bound by residues H247, G250, and K253. A Mn(2+)-binding site is contributed by H247. UDP-alpha-D-glucose contacts are provided by G250 and K253. The segment covering 283 to 302 (HQLNNEVSKPKISDSDKTET) has biased composition (basic and acidic residues). 4 disordered regions span residues 283–320 (HQLN…PTTN), 335–354 (NQNA…NPVP), 371–525 (TNQP…EKDK), and 553–588 (RDAT…EMPN). A compositionally biased stretch (basic and acidic residues) spans 377-386 (ESREYSKEND). Residues 400–419 (SPPNSTQELNSSYSVVSTQA) show a composition bias toward polar residues. A compositionally biased stretch (low complexity) spans 450 to 461 (STAASSNNNVSN). Composition is skewed to polar residues over residues 462 to 485 (QPDG…PSNP) and 492 to 503 (DNIQKPSVSTND). Residues 567 to 576 (DKQEDMKLTA) are compositionally biased toward basic and acidic residues. Residues 577–586 (EETNQPQQEM) are compositionally biased toward polar residues. The O-linked (Glc...) tyrosine glycan is linked to Y598.

It belongs to the glycosyltransferase 8 family. Glycogenin subfamily. The cofactor is Mn(2+).

Its subcellular location is the cytoplasm. It localises to the vacuole. It carries out the reaction L-tyrosyl-[glycogenin] + UDP-alpha-D-glucose = alpha-D-glucosyl-L-tyrosyl-[glycogenin] + UDP + H(+). The enzyme catalyses [1,4-alpha-D-glucosyl](n)-L-tyrosyl-[glycogenin] + UDP-alpha-D-glucose = [1,4-alpha-D-glucosyl](n+1)-L-tyrosyl-[glycogenin] + UDP + H(+). In terms of biological role, self-glucosylating initiator of glycogen synthesis. It catalyzes the formation of a short alpha (1,4)-glucosyl chain covalently attached via a glucose 1-O-tyrosyl linkage to internal tyrosine residues and these chains act as primers for the elongation reaction catalyzed by glycogen synthase. Capable of transferring glucosyl residues to unbound acceptors such as free oligoglucans or oligoglucan derivatives. The protein is Glycogenin-1 of Saccharomyces cerevisiae (strain ATCC 204508 / S288c) (Baker's yeast).